Reading from the N-terminus, the 315-residue chain is T cell receptor beta chain MC.7.G5 (315 aa).

The first 21 residues, 1–21 (MTIRLLCYMGFYFLGAGLMEA), serve as a signal peptide directing secretion. Residues 22–114 (DIYQTPRYLV…TSQYLCASSE (93 aa)) form the Ig-like V-type domain. A t cell receptor beta variable 25-1 region spans residues 22 to 114 (DIYQTPRYLV…TSQYLCASSE (93 aa)). A disulfide bridge connects residues Cys-42 and Cys-110. Positions 46–50 (MGHDK) are CDR1. Residues 68–73 (SYGVNS) form a CDR2 region. A glycan (N-linked (GlcNAc...) asparagine) is linked at Asn-72. The interval 110–127 (CASSEARGLAEFTDTQYF) is CDR3. The t cell receptor beta joining 2-3 stretch occupies residues 122-136 (TDTQYFGPGTRLTVL). The interval 138–315 (DLKNVFPPEV…AMVKRKDSRG (178 aa)) is t cell receptor beta constant 2. Residues 145-254 (PEVAVFEPSE…WTQDRAKPVT (110 aa)) enclose the Ig-like C1-type domain. A disulfide bridge connects residues Cys-167 and Cys-232. Asn-206 carries N-linked (GlcNAc...) asparagine glycosylation. Residues 267-281 (CGFTSESYQQGVLSA) are connecting peptide. The chain crosses the membrane as a helical span at residues 282–304 (TILYEILLGKATLYAVLVSALVL). Residues 305–315 (MAMVKRKDSRG) lie on the Cytoplasmic side of the membrane.

In terms of assembly, disulfide-linked heterodimer with TRAV38-2DV8*01J31*01C*01 alpha chain. The alpha-beta TR associates with the transmembrane signaling CD3 coreceptor proteins to form the TR-CD3 (TCR). The assembly of alpha-beta TR heterodimers with CD3 occurs in the endoplasmic reticulum where a single alpha-beta TR heterodimer associates with one CD3D-CD3E heterodimer, one CD3G-CD3E heterodimer and one CD247 homodimer forming a stable octameric structure. CD3D-CD3E and CD3G-CD3E heterodimers preferentially associate with TR alpha and TR beta chains (via TM domain), respectively. The association of the CD247 homodimer is the last step of TCR assembly in the endoplasmic reticulum and is required for transport to the cell surface. In terms of tissue distribution, expressed in MR1-restricted CD8-positive T cells.

It localises to the cell membrane. In terms of biological role, the beta chain of TRAV38-2DV8*01J31*01C*01/TRBV25-1*01J2S3*01C2*01 alpha-beta T cell receptor (TR) clonotype that displays pan-cancer cell recognition via the invariant MR1 molecule. On CD8-positive T cell clone MC.7.G5, likely recognizes tumor-specific or -associated metabolite(s) essential for cancer cell survival, triggering killing of many cancer cell types including lung, melanoma, leukemia, colon, breast, prostate, bone and ovarian cancer cells. Mediates cancer cell cytotoxicity in an HLA-independent manner. Has no reactivity to healthy cells even stressed or infected by bacteria. Antigen recognition initiates TR-CD3 clustering on the cell surface and intracellular activation of LCK that phosphorylates the ITAM motifs of CD3G, CD3D, CD3E and CD247 enabling the recruitment of ZAP70. In turn, ZAP70 phosphorylates LAT, which recruits numerous signaling molecules to form the LAT signalosome. The LAT signalosome propagates signal branching to three major signaling pathways, the calcium, the mitogen-activated protein kinase (MAPK) kinase and the nuclear factor NF-kappa-B (NF-kB) pathways, leading to the mobilization of transcription factors that are critical for gene expression and essential for T cell differentiation into effector/memory T cells. The polypeptide is T cell receptor beta chain MC.7.G5 (Homo sapiens (Human)).